The primary structure comprises 533 residues: Retinoid isomerohydrolase (533 aa).

Ser-2 carries the post-translational modification N-acetylserine. A phosphothreonine mark is found at Thr-101 and Thr-105. A lipid anchor (S-palmitoyl cysteine; in membrane form) is attached at Cys-112. N6-acetyllysine is present on Lys-113. Ser-117 bears the Phosphoserine mark. Residue His-180 coordinates Fe cation. Residue Cys-231 is the site of S-palmitoyl cysteine; in membrane form attachment. Fe cation contacts are provided by His-241 and His-313. 2 S-palmitoyl cysteine; in membrane form lipidation sites follow: Cys-329 and Cys-330. Residue His-527 participates in Fe cation binding.

The protein belongs to the carotenoid oxygenase family. In terms of assembly, interacts with MYO7A; this mediates light-dependent intracellular transport of RPE65. Requires Fe(2+) as cofactor. Post-translationally, palmitoylation by LRAT regulates ligand binding specificity; the palmitoylated form (membrane form) specifically binds all-trans-retinyl-palmitate, while the soluble unpalmitoylated form binds all-trans-retinol (vitamin A). In terms of tissue distribution, retinal pigment epithelium specific.

It localises to the cytoplasm. Its subcellular location is the cell membrane. The protein localises to the microsome membrane. It catalyses the reaction an all-trans-retinyl ester + H2O = 11-cis-retinol + a fatty acid + H(+). It carries out the reaction lutein = (3R,3'S)-zeaxanthin. The enzyme catalyses all-trans-retinyl hexadecanoate + H2O = 11-cis-retinol + hexadecanoate + H(+). Functionally, critical isomerohydrolase in the retinoid cycle involved in regeneration of 11-cis-retinal, the chromophore of rod and cone opsins. Catalyzes the cleavage and isomerization of all-trans-retinyl fatty acid esters to 11-cis-retinol which is further oxidized by 11-cis retinol dehydrogenase to 11-cis-retinal for use as visual chromophore. Essential for the production of 11-cis retinal for both rod and cone photoreceptors. Also capable of catalyzing the isomerization of lutein to meso-zeaxanthin an eye-specific carotenoid. The soluble form binds vitamin A (all-trans-retinol), making it available for LRAT processing to all-trans-retinyl ester. The membrane form, palmitoylated by LRAT, binds all-trans-retinyl esters, making them available for IMH (isomerohydrolase) processing to all-cis-retinol. The soluble form is regenerated by transferring its palmitoyl groups onto 11-cis-retinol, a reaction catalyzed by LRAT. This is Retinoid isomerohydrolase (Rpe65) from Mus musculus (Mouse).